The sequence spans 776 residues: Probable exo-1,4-beta-xylosidase bxlB (776 aa).

Residues 1–23 (MVHLSPLLRPLAAFSFFTSLAST) form the signal peptide. 2 N-linked (GlcNAc...) asparagine glycosylation sites follow: Asn65 and Asn105. Residue Asp291 is part of the active site. 6 N-linked (GlcNAc...) asparagine glycosylation sites follow: Asn343, Asn410, Asn421, Asn462, Asn623, and Asn766.

Belongs to the glycosyl hydrolase 3 family.

It localises to the secreted. It carries out the reaction Hydrolysis of (1-&gt;4)-beta-D-xylans, to remove successive D-xylose residues from the non-reducing termini.. It participates in glycan degradation; xylan degradation. Functionally, xylan 1,4-beta-xylosidase involved in the hydrolysis of xylan, a major structural heterogeneous polysaccharide found in plant biomass representing the second most abundant polysaccharide in the biosphere, after cellulose. The chain is Probable exo-1,4-beta-xylosidase bxlB (bxlB) from Aspergillus flavus (strain ATCC 200026 / FGSC A1120 / IAM 13836 / NRRL 3357 / JCM 12722 / SRRC 167).